Consider the following 210-residue polypeptide: Neurotrophin-4 (210 aa).

Positions 1–24 (MLPLPSCSLPILLLFLLPSVPIES) are cleaved as a signal peptide. A propeptide spanning residues 25-80 (QPPPSTLPPFLAPEWDLLSPRVVLSRGAPAGPPLLFLLEAGAFRESAGAPANRSRR) is cleaved from the precursor. Residue Asn76 is glycosylated (N-linked (GlcNAc...) asparagine). 3 disulfide bridges follow: Cys97-Cys170, Cys141-Cys199, and Cys158-Cys201.

It belongs to the NGF-beta family. Highest levels in prostate, lower levels in thymus, placenta, and skeletal muscle. Expressed in embryonic and adult tissues.

It localises to the secreted. In terms of biological role, target-derived survival factor for peripheral sensory sympathetic neurons. May promote ameloblast differentiation and subsequent reduction in proliferation of ameloblasts. This is Neurotrophin-4 (NTF4) from Homo sapiens (Human).